Reading from the N-terminus, the 828-residue chain is MDESALTLGTIDVSYLPHSSEYSVGRCKHTSEEWGECGFRPTIFRSATLKWKESLMSRKRPFVGRCCYSCTPQSWDKFFNPSIPSLGLRNVIYINETHTRHRGWLARRLSYVLFIQERDVHKGMFATNVTENVLNSSRVQEAIAEVAAELNPDGSAQQQSKAVNKVKKKAKRILQEMVATVSPAMIRLTGWVLLKLFNSFFWNIQIHKGQLEMVKAATETNLPLLFLPVHRSHIDYLLLTFILFCHNIKAPYIASGNNLNIPIFSTLIHKLGGFFIRRRLDETPDGRKDVLYRALLHGHIVELLRQQQFLEIFLEGTRSRSGKTSCARAGLLSVVVDTLSTNVIPDILIIPVGISYDRIIEGHYNGEQLGKPKKNESLWSVARGVIRMLRKNYGCVRVDFAQPFSLKEYLESQSQKPVSALLSLEQALLPAILPSRPSDAADEGRDTSINESRNATDESLRRRLIANLAEHILFTASKSCAIMSTHIVACLLLYRHRQGIDLSTLVEDFFVMKEEVLARDFDLGFSGNSEDVVMHAIQLLGNCVTITHTSRNDEFFITPSTTVPSVFELNFYSNGVLHVFIMEAIIACSLYAVLNKRGLGGPTSTPPNLISQEQLVRKAASLCYLLSNEGTISLPCQTFYQVCHETVGKFIQYGILTVAEHDDQEDISPSLAEQQWDKKLPEPLSWRSDEEDEDSDFGEEQRDCYLKVSQSKEHQQFITFLQRLLGPLLEAYSSAAIFVHNFSGPVPEPEYLQKLHKYLITRTERNVAVYAESATYCLVKNAVKMFKDIGVFKETKQKRVSVLELSSTFLPQCNRQKLLEYILSFVVL.

The Cytoplasmic portion of the chain corresponds to 1-87; that stretch reads MDESALTLGT…FFNPSIPSLG (87 aa). Positions 80–120 are important for mitochondrial localization; the sequence is NPSIPSLGLRNVIYINETHTRHRGWLARRLSYVLFIQERDV. The stretch at 88 to 118 is an intramembrane region; the sequence is LRNVIYINETHTRHRGWLARRLSYVLFIQER. At 119 to 828 the chain is on the cytoplasmic side; it reads DVHKGMFATN…LEYILSFVVL (710 aa). Positions 230–235 match the HXXXXD motif motif; that stretch reads HRSHID. CoA-binding residues include Arg-278, Arg-279, Lys-288, Arg-293, and Arg-328. Position 380 is a phosphoserine (Ser-380). The disordered stretch occupies residues 435-455; that stretch reads SRPSDAADEGRDTSINESRNA. The span at 442-455 shows a compositional bias: basic and acidic residues; that stretch reads DEGRDTSINESRNA. Arg-462 lines the CoA pocket. 2 positions are modified to phosphoserine: Ser-688 and Ser-695. N6-acetyllysine is present on residues Lys-780 and Lys-784.

It belongs to the GPAT/DAPAT family.

Its subcellular location is the mitochondrion outer membrane. The catalysed reaction is sn-glycerol 3-phosphate + an acyl-CoA = a 1-acyl-sn-glycero-3-phosphate + CoA. The enzyme catalyses (9Z,12Z)-octadecadienoyl-CoA + sn-glycerol 3-phosphate = 1-(9Z,12Z)-octadecadienoyl-sn-glycero-3-phosphate + CoA. It carries out the reaction sn-glycerol 3-phosphate + (9Z)-octadecenoyl-CoA = 1-(9Z-octadecenoyl)-sn-glycero-3-phosphate + CoA. It catalyses the reaction sn-glycerol 3-phosphate + octadecanoyl-CoA = 1-octadecanoyl-sn-glycero-3-phosphate + CoA. The catalysed reaction is sn-glycerol 3-phosphate + hexadecanoyl-CoA = 1-hexadecanoyl-sn-glycero-3-phosphate + CoA. The enzyme catalyses dodecanoyl-CoA + sn-glycerol 3-phosphate = 1-dodecanoyl-sn-glycerol 3-phosphate + CoA. It carries out the reaction 1-acyl-sn-glycero-3-phospho-(1'-sn-glycerol) + an acyl-CoA = a 1,2-diacyl-sn-glycero-3-phospho-(1'-sn-glycerol) + CoA. Its pathway is phospholipid metabolism; CDP-diacylglycerol biosynthesis; CDP-diacylglycerol from sn-glycerol 3-phosphate: step 1/3. Its function is as follows. Mitochondrial membrane protein that catalyzes the essential first step of biosynthesis of glycerolipids such as triglycerides, phosphatidic acids and lysophosphatidic acids. Esterifies acyl-group from acyl-coenzyme A (acyl-CoA) to the sn-1 position of glycerol-3-phosphate, to produce lysophosphatidic acid. Has a narrow hydrophobic binding cleft that selects for a linear acyl chain. Catalytic activity is higher for substrates with a 16-carbon acyl chain. The polypeptide is Glycerol-3-phosphate acyltransferase 1, mitochondrial (Homo sapiens (Human)).